The following is a 160-amino-acid chain: Small ribosomal subunit protein uS7 (160 aa).

Belongs to the universal ribosomal protein uS7 family. Part of the 30S ribosomal subunit. Contacts proteins S9 and S11.

Its function is as follows. One of the primary rRNA binding proteins, it binds directly to 16S rRNA where it nucleates assembly of the head domain of the 30S subunit. Is located at the subunit interface close to the decoding center, probably blocks exit of the E-site tRNA. The polypeptide is Small ribosomal subunit protein uS7 (Hydrogenobaculum sp. (strain Y04AAS1)).